A 345-amino-acid polypeptide reads, in one-letter code: Dihydroorotase (345 aa).

Residues His-14 and His-16 each contribute to the Zn(2+) site. Residues 16–18 (HLR) and Asn-42 contribute to the substrate site. Positions 102, 139, and 177 each coordinate Zn(2+). Lys-102 is subject to N6-carboxylysine. His-139 provides a ligand contact to substrate. Leu-222 is a binding site for substrate. Asp-250 provides a ligand contact to Zn(2+). Residue Asp-250 is part of the active site. Positions 254 and 266 each coordinate substrate.

The protein belongs to the metallo-dependent hydrolases superfamily. DHOase family. Class II DHOase subfamily. In terms of assembly, homodimer. It depends on Zn(2+) as a cofactor.

It catalyses the reaction (S)-dihydroorotate + H2O = N-carbamoyl-L-aspartate + H(+). It functions in the pathway pyrimidine metabolism; UMP biosynthesis via de novo pathway; (S)-dihydroorotate from bicarbonate: step 3/3. Catalyzes the reversible cyclization of carbamoyl aspartate to dihydroorotate. This is Dihydroorotase from Nitrosomonas eutropha (strain DSM 101675 / C91 / Nm57).